The primary structure comprises 1074 residues: MELPDSPPPLDAPSPPHFLDAPQDRWNVFYPAVQTLVNALGGYEEVESPPDSGIFETVYRPGDSVLGVLKDLKKLWRKDDEDDERTVARCMYRAELMKELVAIVVECAERGEWGRKVALVACDLIAALTWPIDVAQELKEIEDEGPVVTDYASLLRAQLEYKALFLKTTKPLKSILSLMVPCLAKPRKDEKDSRIISLGLHVVRNLLAIKDAVAEGTATGEKEEFAHLQSDLITQLDSLTYLQLFLTLASCADKTDLNPFNVIVLDILHLIFRGIKPSELVQDQKRVPIDSLAKLLEKEKKQKALNSRVGSTRHSRFGTTITVKTAEQRVVLHRQTAIIENPGKILDMTKRKKAVVAKRMDDLTVFVNLSSDAMVILQSFSKAFLEICYNTFIESILRDIRMERTKIRPSDNIRVFYLSSFFIEYLLLLRHKLLQKGGSRRLEELPLGLVAQIAEMDSVKWLFARLRICWDDKPKAWTELQACIECFTQILLLIDDMSTSTNEEDVEVAEILQHQLYYNYDILDSALAVVREYKNQSIAYLDSIIHFAYVLLRMLEKYSKTKAFMFIRKRKNTHKKRKERQAASQANADREQRKIPEEYGDEGEEAFAPDEDAPSYAEHAFTFQSFEKRFAQEAVVNTLLTYLERFLEFDGPEPMKRVVGLMHRQVIKAHAEGLYFKVSTLIIFRRILDKQHVLPAAPSSRDLITLITYILRKFFKHVEKEPFTLVEALSSKSRGKWKTVGGGSDDDDDEMAGQRGRIKEKMGPVELQFIKKHKFSWSQQMSIAFAIIWGDGHGYLIKWIVEVLEQVLAAKQEIVLTTDGGINGDEDEEDEDGNARVRRFGRPSDEAISKFTQFDLQPEESEQITAVTSNPHFRLMLKLLSFDLPPPPMELDFEEDVSSEELALAREKSDSAWFLPANVLPSDIEASIGALKQYMEEPPTLDDDPKKLLRRKARATRRRRRSPSVESYDSETGEVRPGHQHKKNPRQKRAKKAVETQNYKSAAFIEDSDDEDPEATRRFFENEERLRREMDELAAQGGHPMMERGVKRKRGKKNGKGAISDTPPPSQRGNDRET.

Disordered stretches follow at residues 572–595 (NTHK…QRKI) and 936–1074 (EEPP…DRET). 2 stretches are compositionally biased toward basic residues: residues 948 to 962 (LLRR…RRRS) and 978 to 991 (GHQH…KRAK). Residues 1014–1031 (EATRRFFENEERLRREMD) are compositionally biased toward basic and acidic residues. The span at 1046–1055 (VKRKRGKKNG) shows a compositional bias: basic residues.

This sequence belongs to the timeless family.

The protein localises to the nucleus. Functionally, involved in chromosome segregation during meiosis and DNA damage repair. The chain is Topoisomerase 1-associated factor 1 (TOF1) from Cryptococcus neoformans var. neoformans serotype D (strain B-3501A) (Filobasidiella neoformans).